A 623-amino-acid chain; its full sequence is DELLA protein RHT-1 (623 aa).

Positions 1–27 are disordered; it reads MKREYQDAGGSGGGGGGMGSSEDKMMV. Residues 9–19 are compositionally biased toward gly residues; that stretch reads GGSGGGGGGMG. A DELLA motif motif is present at residues 38–42; sequence DELLA. 2 disordered regions span residues 109-138 and 159-201; these read LNAPPPPLPPAPQLNASTSSTVTGSGGYFD and AGAT…GARS. A compositionally biased stretch (pro residues) spans 111 to 120; the sequence is APPPPLPPAP. Low complexity-rich tracts occupy residues 121–131 and 181–201; these read QLNASTSSTVT and GGSSTSSSSSSSSSLGGGARS. The GRAS domain maps to 225–619; the sequence is VDTQEAGIRL…RPLIATSAWR (395 aa). A leucine repeat I (LRI) region spans residues 232–288; that stretch reads IRLVHALLACAEAVQQENLSAAEALVKQIPLLAASQGGAMRKVAAYFGEALARRVFR. Positions 239–243 match the LxCxE motif motif; sequence LACAE. A VHIID region spans residues 307-372; sequence HAHFYESCPY…GGPPSFRLTG (66 aa). A VHIID motif is present at residues 338–342; it reads VHVVD. Residues 386-425 form a leucine repeat II (LRII) region; the sequence is QVGWKLAQFAHTIRVDFQYRGLVAATLADLEPFMLQPEGE. A PFYRE region spans residues 435 to 540; that stretch reads IAVNSVFEMH…EVYLGRQICN (106 aa). The interval 543–619 is SAW; the sequence is ACEGAERTER…RPLIATSAWR (77 aa).

Belongs to the GRAS family. DELLA subfamily. Post-translationally, phosphorylated. Ubiquitinated. Upon GA application it is ubiquitinated, leading to its subsequent degradation.

The protein localises to the nucleus. In terms of biological role, probable transcriptional regulator that acts as a repressor of the gibberellin (GA) signaling pathway. Probably acts by participating in large multiprotein complexes that repress transcription of GA-inducible genes. Upon GA application, it is degraded by the proteasome, allowing the GA signaling pathway. This Triticum aestivum (Wheat) protein is DELLA protein RHT-1 (RHT1).